We begin with the raw amino-acid sequence, 199 residues long: Ribonuclease HII (199 aa).

Residues 1-199 (MCVCGIDEAG…TYKNLVQGHI (199 aa)) enclose the RNase H type-2 domain. D7, E8, and D97 together coordinate a divalent metal cation.

The protein belongs to the RNase HII family. Requires Mn(2+) as cofactor. Mg(2+) serves as cofactor.

It localises to the cytoplasm. The enzyme catalyses Endonucleolytic cleavage to 5'-phosphomonoester.. Functionally, endonuclease that specifically degrades the RNA of RNA-DNA hybrids. The protein is Ribonuclease HII of Picrophilus torridus (strain ATCC 700027 / DSM 9790 / JCM 10055 / NBRC 100828 / KAW 2/3).